Here is a 424-residue protein sequence, read N- to C-terminus: ATP synthase subunit beta, mitochondrial (424 aa).

The N-terminal 60 residues, 1–60 (MFRLSSGLLKGGACASRSRIPQLGRSLYSTATSAGADKTQGKIHTVIGAVVDVQFNHGRL), are a transit peptide targeting the mitochondrion. Residues 187–194 (GGAGVGKT), 188–195 (GAGVGKTV), 219–220 (ER), and Tyr-374 each bind ATP.

Belongs to the ATPase alpha/beta chains family. In terms of assembly, F-type ATPases have 2 components, CF(1) - the catalytic core - and CF(0) - the membrane proton channel. CF(1) has five subunits: alpha(3), beta(3), gamma(1), delta(1), epsilon(1). CF(0) has three main subunits: a, b and c.

The protein localises to the mitochondrion. It is found in the mitochondrion inner membrane. It catalyses the reaction ATP + H2O + 4 H(+)(in) = ADP + phosphate + 5 H(+)(out). Its function is as follows. ATP synthase subunit beta; part of the gene cluster that mediates the biosynthesis of citreoviridin, an inhibitor of the of F1-ATPase beta-subunit. Mitochondrial membrane ATP synthase (F(1)F(0) ATP synthase or Complex V) produces ATP from ADP in the presence of a proton gradient across the membrane which is generated by electron transport complexes of the respiratory chain. Whereas ctvA to ctvD constitute the core biosynthetic gene cluster, ctvE acts as a self-resistance gene. This Aspergillus terreus (strain NIH 2624 / FGSC A1156) protein is ATP synthase subunit beta, mitochondrial.